The chain runs to 202 residues: Probable 1-Cys peroxiredoxin (202 aa).

A Thioredoxin domain is found at 1 to 148 (STHGKIRIHD…VVRAVDSLLT (148 aa)). The Cysteine sulfenic acid (-SOH) intermediate role is filled by Cys30. The Bipartite nuclear localization signal motif lies at 178 to 201 (KKLFPQGFETKDLPSKKGYLRFTK).

This sequence belongs to the peroxiredoxin family. Prx6 subfamily. As to expression, embryos.

Its subcellular location is the nucleus. It localises to the cytoplasm. It carries out the reaction a hydroperoxide + [thioredoxin]-dithiol = an alcohol + [thioredoxin]-disulfide + H2O. Thiol-specific peroxidase that catalyzes the reduction of hydrogen peroxide and organic hydroperoxides to water and alcohols, respectively. Seems to contribute to the inhibition of germination during stress. In Bromus secalinus (Rye brome), this protein is Probable 1-Cys peroxiredoxin.